Consider the following 100-residue polypeptide: Small ribosomal subunit protein uS14 (100 aa).

This sequence belongs to the universal ribosomal protein uS14 family. Part of the 30S ribosomal subunit. Contacts proteins S3 and S10.

Functionally, binds 16S rRNA, required for the assembly of 30S particles and may also be responsible for determining the conformation of the 16S rRNA at the A site. This Prochlorococcus marinus (strain NATL1A) protein is Small ribosomal subunit protein uS14.